Reading from the N-terminus, the 103-residue chain is NADH-quinone oxidoreductase subunit K (103 aa).

Transmembrane regions (helical) follow at residues 1 to 21 (MIVP…VGGV), 29 to 49 (ILLI…AFAG), and 62 to 82 (AVII…ALLV). The tract at residues 84–103 (GRRGGGTDRADSYDRLGEES) is disordered. The segment covering 88–103 (GGTDRADSYDRLGEES) has biased composition (basic and acidic residues).

This sequence belongs to the complex I subunit 4L family. As to quaternary structure, NDH-1 is composed of 14 different subunits. Subunits NuoA, H, J, K, L, M, N constitute the membrane sector of the complex.

The protein resides in the cell inner membrane. The enzyme catalyses a quinone + NADH + 5 H(+)(in) = a quinol + NAD(+) + 4 H(+)(out). In terms of biological role, NDH-1 shuttles electrons from NADH, via FMN and iron-sulfur (Fe-S) centers, to quinones in the respiratory chain. The immediate electron acceptor for the enzyme in this species is believed to be ubiquinone. Couples the redox reaction to proton translocation (for every two electrons transferred, four hydrogen ions are translocated across the cytoplasmic membrane), and thus conserves the redox energy in a proton gradient. The chain is NADH-quinone oxidoreductase subunit K from Solidesulfovibrio magneticus (strain ATCC 700980 / DSM 13731 / RS-1) (Desulfovibrio magneticus).